The chain runs to 836 residues: Protein IWS1 homolog A (836 aa).

A disordered region spans residues 1-542 (MEADNYSPEH…DMKSGKMGDY (542 aa)). 8 stretches are compositionally biased toward basic and acidic residues: residues 20-36 (QDERDSASDDEGNEQRS), 43-122 (HQSE…DRSP), 133-148 (EPVRHSASDSEDDVPR), 157-186 (DERHIKKTASDSEDEAPAKHRVSDTEDKAP), 206-218 (DSKDEAPPKHAAS), 288-309 (VPVKRAASDSEEETHPKGKASD), 370-386 (RSSESDSSDKVDGKKLQ), and 458-469 (ERKSKTETKSAD). The span at 476–485 (SDSENEEENL) shows a compositional bias: acidic residues. Positions 533–542 (DMKSGKMGDY) are enriched in basic and acidic residues. The region spanning 631–709 (SAIKEWLTPL…NEWSRPIFGL (79 aa)) is the TFIIS N-terminal domain. The segment at 714–746 (KGMTREEREQRDIEQMPQRRRMSSSGGQTPRRD) is disordered. The segment covering 716–727 (MTREEREQRDIE) has biased composition (basic and acidic residues).

Belongs to the IWS1 family.

Its subcellular location is the nucleus. Its function is as follows. Transcription factor which plays a key role in defining the composition of the RNA polymerase II (RNAPII) elongation complex and in modulating the production of mature mRNA transcripts. The polypeptide is Protein IWS1 homolog A (iws1-a) (Xenopus laevis (African clawed frog)).